A 361-amino-acid chain; its full sequence is Hydroxyproline O-arabinosyltransferase PLENTY (361 aa).

The helical; Signal-anchor transmembrane segment at L13–I33 threads the bilayer.

The protein resides in the golgi apparatus membrane. The catalysed reaction is trans-4-hydroxy-L-prolyl-[protein] + UDP-beta-L-arabinofuranose = O-(beta-L-arabinofuranosyl)-trans-4-hydroxy-L-prolyl-[protein] + UDP + H(+). Its function is as follows. Glycosyltransferase involved in the O-arabinosylation of several proteins including extensins and small signaling peptides. Catalyzes the transfer of the initial L-arabinose to the hydroxyl group of Hyp residues. Probably involved in the arabinosylation of CLAVATA3/ESR-related (CLE) signaling peptides that move from root to shoot, to interact with receptor kinase signaling that regulates nodulation. Involved in long distance nodulation signaling events. Involved in the autoregulation of nodulation (AON), a long distance systemic signaling from root to shoot and back again, which allows legumes to limit the number of root nodules formed based on available nitrogen and previous rhizobial colonization. This chain is Hydroxyproline O-arabinosyltransferase PLENTY, found in Lotus japonicus (Lotus corniculatus var. japonicus).